We begin with the raw amino-acid sequence, 415 residues long: Adipocyte plasma membrane-associated protein (415 aa).

At M1–R39 the chain is on the cytoplasmic side. A helical membrane pass occupies residues V40–L60. At E61–L412 the chain is on the extracellular side. Residue N159 is glycosylated (N-linked (GlcNAc...) asparagine).

Belongs to the strictosidine synthase family.

The protein localises to the membrane. The protein is Adipocyte plasma membrane-associated protein (apmap) of Danio rerio (Zebrafish).